A 453-amino-acid polypeptide reads, in one-letter code: MDHAAAQLEKQHVHDVYESTAPYFSDLQSKAWPRVRQFLQEQKPGSLIADIGCGTGKYLKVNSQVHTLGCDYCAPLVEIARSRGCEVMVCDNLNLPFRDQGFDAIISIGVIHHFSTKQRRIRAIKEMARVLVPGGQLMIYVWAMEQKNRHFEKQDVLVPWNKALCSQRLSESGQPGRKQECGHPERGYPYHPACSACHCSVCFEGRCNSKRSHSVDCDSVLAGTCCANISKEGEEENGFYNTLGKSFRSWFSSRSLDESTLRKQIEKVRPLKSTESWANSAISIQPSRHSSFDLGHPETLSAGEQNLDEEVFVEPSQGPREWLRAPTTCKQLNGDHPGVIRRNGDGNFLGGANAKESCVDEGNLEEGTASGSKLWRRISAADSTDSNPGDAISVEEQQPDVLDSRAFMRYYHVFREGELCGLLKESVSELHILSSGNDHGNWCVIAEKRESCD.

At serine 214 the chain carries Phosphoserine.

It belongs to the methyltransferase superfamily.

Its function is as follows. May modify wobble uridines in specific arginine and glutamic acid tRNAs. Acts as a tumor suppressor by promoting the expression of LIN9. This Bos taurus (Bovine) protein is Probable tRNA methyltransferase 9B (TRMT9B).